The chain runs to 104 residues: Large ribosomal subunit protein bL21 (104 aa).

The protein belongs to the bacterial ribosomal protein bL21 family. Part of the 50S ribosomal subunit. Contacts protein L20.

Functionally, this protein binds to 23S rRNA in the presence of protein L20. The polypeptide is Large ribosomal subunit protein bL21 (Helicobacter pylori (strain HPAG1)).